The chain runs to 252 residues: Body wall muscle protein HR-29 (252 aa).

N-acetylserine is present on serine 2. A run of 3 repeats spans residues 37 to 55, 56 to 74, and 75 to 93. The segment at 37 to 93 is 3 X 19 AA approximate tandem repeats; that stretch reads RDWMTTPYSSTGIGRRDLSQDWMTTPYTPAGVGRRDLSQDWMTTPYTSKGIGSRNLS. Residues 138 to 249 form the sHSP domain; sequence ISVEHEGKTT…KKTAVPVTVE (112 aa).

This sequence belongs to the small heat shock protein (HSP20) family. In terms of assembly, exists as an oligomer.

It is found in the membrane. Functionally, may be a component of myofibrils where it acts as a stabilizer. The chain is Body wall muscle protein HR-29 from Halocynthia roretzi (Sea squirt).